A 270-amino-acid chain; its full sequence is tRNA 2-(methylsulfanyl)-N(6)-isopentenyladenosine(37) hydroxylase (270 aa).

Positions 59, 137, 140, 190, 219, and 222 each coordinate Fe cation.

This sequence belongs to the MiaE family. As to quaternary structure, monomer. Fe cation serves as cofactor.

It catalyses the reaction 2-methylsulfanyl-N(6)-dimethylallyladenosine(37) in tRNA + AH2 + O2 = N(6)-[(2E)-4-hydroxy-3-methylbut-2-en-1-yl]-2-(methylsulfanyl)adenosine(37) in tRNA + A + H2O. It participates in tRNA modification; 2-methylthio-N-6-(cis-hydroxy)isopentenyl adenosine-tRNA biosynthesis. Functionally, involved in specific tRNA modification. Catalyzes the oxygen-dependent hydroxylation of 2-methylthio-N-6-isopentenyl adenosine (ms2i6A) to produce 2-methylthio-N-6-(cis-hydroxy)isopentenyl adenosine (ms2io6A) at position 37 in tRNAs. Can also use N6-(dimethylallyl)adenosine (i6A) as substrate, with lower efficiency. The presence of the hydroxyl group on the tRNA may regulate the ability of S.typhimurium to grow on the citric acid cycle (CAC) intermediates succinate, fumarate and malate. This Salmonella typhimurium (strain LT2 / SGSC1412 / ATCC 700720) protein is tRNA 2-(methylsulfanyl)-N(6)-isopentenyladenosine(37) hydroxylase.